A 462-amino-acid polypeptide reads, in one-letter code: Putative E3 ubiquitin-protein ligase XBAT35 (462 aa).

3 ANK repeats span residues 6–35 (SKGE…DLEW), 39–69 (EGKT…NVNA), and 75–104 (HAGT…NPLV). 2 disordered regions span residues 277–341 (HPPV…GKAS) and 356–402 (SSPS…EGER). A compositionally biased stretch (polar residues) spans 304–317 (SLHTTMSDPSNLNH). Residues 319–341 (SIGQASSSSGPSSSTAPPSGKAS) are compositionally biased toward low complexity. An RING-type zinc finger spans residues 411-450 (CAICLDAPSEAVCVPCGHVAGCMSCLKEIKSKNWGCPVCR).

It carries out the reaction S-ubiquitinyl-[E2 ubiquitin-conjugating enzyme]-L-cysteine + [acceptor protein]-L-lysine = [E2 ubiquitin-conjugating enzyme]-L-cysteine + N(6)-ubiquitinyl-[acceptor protein]-L-lysine.. Its pathway is protein modification; protein ubiquitination. Its function is as follows. No E3 ubiquitin-protein ligase activity observed when associated with the E2 enzyme UBC8 in vitro. The sequence is that of Putative E3 ubiquitin-protein ligase XBAT35 (XBAT35) from Arabidopsis thaliana (Mouse-ear cress).